The chain runs to 449 residues: GTPase Der (449 aa).

2 EngA-type G domains span residues proline 4–threonine 174 and leucine 183–glutamine 358. Residues glycine 10–serine 17, aspartate 57–valine 61, asparagine 126–aspartate 129, glycine 189–serine 196, aspartate 236–isoleucine 240, and asparagine 301–aspartate 304 each bind GTP. The KH-like domain occupies lysine 359–glutamate 444.

It belongs to the TRAFAC class TrmE-Era-EngA-EngB-Septin-like GTPase superfamily. EngA (Der) GTPase family. As to quaternary structure, associates with the 50S ribosomal subunit.

Its function is as follows. GTPase that plays an essential role in the late steps of ribosome biogenesis. This Chloroflexus aurantiacus (strain ATCC 29366 / DSM 635 / J-10-fl) protein is GTPase Der.